The primary structure comprises 560 residues: MSKDIKSVEHSPKIHQRNDPQHVNDRTFFIDASNQSLTAIPLEIFTFTELEEVHLENNQIEEIPQEIQRLKNIRVLYLDKNNLRSLCPALGLLSSLESLDLSYNPIFSSSLVVVSFLHALRELRLYQTDLKEIPVVIFKNLHHLELLGLTGNHLKCLPKEIVNQTKLREIYLKRNQFEVFPQELCVLYTLEIIDLDENKIGAIPEEIGHLTGLQKFYMASNNLPVLPASLCQCSQLSVLDLSHNLLHSIPKSFAELRKMTEIGLSGNRLEKVPRLICRWTSLHLLYLGNTGLHRLRGSFRCLVNLRFLDLSQNHLHHCPLQICALKNLEVLGLDDNKIGQLPSELGSLSKLKILGLTGNEFLSFPEEVLSLASLEKLYIGQDQGFKLTYVPEHIRKLQSLKELYIENNHLEYLPVSLGSMPNLEVLDCRHNLLKQLPDAICQAQALKELRLEDNLLTHLPENLDSLVNLKVLTLMDNPMEEPPKEVCAEGNEAIWKYLKENRNRNIMATKIQAWWRGTMVQRGFGKFGELLKPQKKGKTSPKDKKGKKDVKGKPGKGKKK.

Residues 1–20 are disordered; that stretch reads MSKDIKSVEHSPKIHQRNDP. LRR repeat units lie at residues 23-47, 48-70, 72-95, 97-116, 117-140, 141-164, 166-187, 188-210, 212-233, 234-256, 258-281, 283-301, 302-325, 326-348, 350-371, 374-397, 398-422, 424-443, 444-466, and 468-489; these read VNDR…IFTF, TELE…IQRL, NIRV…LLSS, ESLD…VVSF, LHAL…IFKN, LHHL…IVNQ, KLRE…LCVL, YTLE…IGHL, GLQK…LCQC, SQLS…FAEL, KMTE…RWTS, HLLY…SFRC, LVNL…ICAL, KNLE…LGSL, KLKI…VLSL, LEKL…IRKL, QSLK…SMPN, EVLD…ICQA, QALK…LDSL, and NLKV…VCAE. One can recognise an IQ domain in the interval 504-533; the sequence is RNIMATKIQAWWRGTMVQRGFGKFGELLKP. The tract at residues 529–560 is disordered; that stretch reads ELLKPQKKGKTSPKDKKGKKDVKGKPGKGKKK. The span at 533–560 shows a compositional bias: basic residues; it reads PQKKGKTSPKDKKGKKDVKGKPGKGKKK.

This Homo sapiens (Human) protein is Leucine-rich repeat and IQ domain-containing protein 4 (LRRIQ4).